The primary structure comprises 298 residues: Putative S-adenosyl-L-methionine-dependent methyltransferase MAV_0778 (298 aa).

S-adenosyl-L-methionine contacts are provided by residues Asp124 and Asp153 to Leu154.

This sequence belongs to the UPF0677 family.

Its function is as follows. Exhibits S-adenosyl-L-methionine-dependent methyltransferase activity. The chain is Putative S-adenosyl-L-methionine-dependent methyltransferase MAV_0778 from Mycobacterium avium (strain 104).